A 342-amino-acid chain; its full sequence is Ketoreductase nvfG (342 aa).

This sequence belongs to the NAD(P)-dependent epimerase/dehydratase family. Dihydroflavonol-4-reductase subfamily.

Its pathway is secondary metabolite biosynthesis; terpenoid biosynthesis. Functionally, ketoreductase; part of the gene cluster that mediates the biosynthesis of novofumigatonin, a heavily oxygenated meroterpenoid containing a unique orthoester moiety. The first step of the pathway is the synthesis of 3,5-dimethylorsellinic acid (DMOA) by the polyketide synthase nvfA via condensation of one acetyl-CoA starter unit with 3 malonyl-CoA units and 2 methylations. DMOA is then converted to farnesyl-DMOA by the farnesyltransferase nvfB. Epoxydation by FAD-dependent monooxygenase nvfK, followed by a protonation-initiated cyclization catalyzed by the terpene cyclase nvfL leads to the production of asnavolin H. The short chain dehydrogenase nvfC then as a 3-OH dehydrogenase of asnovolin H to yield chemesin D. There are two branches to synthesize asnovolin A from chemesin D. In one branch, chemesin D undergoes Baeyer-Villiger oxidation by nvfH, methylation by nvfJ, and enoyl reduction by the nvfM D enoylreductase that reduces the double bond between C-5'and C-6', to form respectively asnovolin I, asnovolin K, and asnovolin A. In the other branch, the methylation precedes the Baeyer-Villiger oxidation and the enoyl reduction to yield asnovolin A via the asnovolin J intermediate. Asnovolin A is further converted to fumigatonoid A by the Fe(II)/2-oxoglutarate-dependent dioxygenase nvfI that catalyzes an endoperoxidation reaction. The alpha/beta hydrolase nvfD then acts as an epimerase that converts fumigatonoid A to its C-5' epimer, which then undergoes spontaneous or nvfD-catalyzed lactonization. The following step utilizes the ketoreductase nvfG to produce fumigatonoid B. The dioxygenase nvfE further converts fumigatonoid B into fumigatonoid C. Finally the Fe(II)/2-oxoglutarate-dependent dioxygenase nvfF catalyzes two rounds of oxidation to transform fumigatonoid C into the end product, novofumigatonin A. The polypeptide is Ketoreductase nvfG (Aspergillus novofumigatus (strain IBT 16806)).